Reading from the N-terminus, the 165-residue chain is UPF0303 protein Bcep18194_A4700 (165 aa).

It belongs to the UPF0303 family.

This is UPF0303 protein Bcep18194_A4700 from Burkholderia lata (strain ATCC 17760 / DSM 23089 / LMG 22485 / NCIMB 9086 / R18194 / 383).